The primary structure comprises 152 residues: Plant UBX domain-containing protein 12 (152 aa).

The disordered stretch occupies residues 32-61 (KRFSEEESEETENTTNSSNAVFGFPNLPEE). Residues 67–150 (DQSVLCRICV…GLANSLVSVT (84 aa)) form the UBX domain.

In Arabidopsis thaliana (Mouse-ear cress), this protein is Plant UBX domain-containing protein 12.